A 23-amino-acid polypeptide reads, in one-letter code: Hemocyanin subunit 4 (23 aa).

Belongs to the tyrosinase family. Hemocyanin subfamily. Hemolymph.

The protein localises to the secreted. It is found in the extracellular space. Its function is as follows. Hemocyanins are copper-containing oxygen carriers occurring freely dissolved in the hemolymph of many mollusks and arthropods. The chain is Hemocyanin subunit 4 from Carcinus maenas (Common shore crab).